Reading from the N-terminus, the 287-residue chain is Glucose import system permease protein GlcU (287 aa).

Transmembrane regions (helical) follow at residues 14 to 34 (HYLA…AMLI), 76 to 96 (IIVI…AYFF), 113 to 133 (VLFS…LLPL), 149 to 169 (IIFA…SMFI), 194 to 214 (IVFP…IIQA), 218 to 238 (FFIP…IAVL), and 250 to 270 (DTFA…VFLG). The ABC transmembrane type-1 domain maps to 71–269 (LINSLIIVIP…IIPLAIFVFL (199 aa)).

This sequence belongs to the binding-protein-dependent transport system permease family. As to quaternary structure, the complex is composed of two ATP-binding proteins (GlcV), two transmembrane proteins (GlcT and GlcU) and a solute-binding protein (GlcS).

Its subcellular location is the cell membrane. In terms of biological role, part of the ABC transporter complex GlcSTUV involved in glucose uptake. Responsible for the translocation of the substrate across the membrane. The polypeptide is Glucose import system permease protein GlcU (Saccharolobus solfataricus (strain ATCC 35092 / DSM 1617 / JCM 11322 / P2) (Sulfolobus solfataricus)).